A 439-amino-acid polypeptide reads, in one-letter code: Probable eukaryotic translation initiation factor 5-1 (439 aa).

GTP is bound at residue 29-36; the sequence is GRGNGIKT. Residues 143–245 are disordered; that stretch reads LKNPPEQKKS…REAAEKRMKE (103 aa). Over residues 147 to 186 the composition is skewed to basic and acidic residues; it reads PEQKKSSKDKKSMRRAEKERLREGEAADEEMRKLKKEAAS. Acidic residues predominate over residues 214-228; the sequence is DENDQADSEEDDDDV. Position 232 is a phosphothreonine (threonine 232). Basic and acidic residues predominate over residues 234–245; the sequence is TSREAAEKRMKE. The region spanning 283-439 is the W2 domain; that stretch reads KIPENAHEKL…QNAESESEEE (157 aa). A phosphoserine mark is found at serine 434 and serine 436.

It belongs to the eIF-2-beta/eIF-5 family.

Its function is as follows. Catalyzes the hydrolysis of GTP bound to the 40S ribosomal initiation complex (40S.mRNA.Met-tRNA[F].eIF-2.GTP) with the subsequent joining of a 60S ribosomal subunit resulting in the release of eIF-2 and the guanine nucleotide. The subsequent joining of a 60S ribosomal subunit results in the formation of a functional 80S initiation complex (80S.mRNA.Met-tRNA[F]). The protein is Probable eukaryotic translation initiation factor 5-1 of Arabidopsis thaliana (Mouse-ear cress).